The primary structure comprises 364 residues: Esculetin O-methyltransferase (364 aa).

Position 132 (Asn132) interacts with bergaptol. Residues Gly209, Asp232, Asp252, Met253, Met265, and Lys266 each contribute to the S-adenosyl-L-homocysteine site. Bergaptol is bound at residue His270. The Proton acceptor role is filled by His270.

Belongs to the class I-like SAM-binding methyltransferase superfamily. Cation-independent O-methyltransferase family. COMT subfamily. In terms of assembly, homodimer. In terms of tissue distribution, expressed ubiquitously.

The catalysed reaction is bergaptol + S-adenosyl-L-methionine = bergapten + S-adenosyl-L-homocysteine. It catalyses the reaction xanthotoxol + S-adenosyl-L-methionine = xanthotoxin + S-adenosyl-L-homocysteine + H(+). It carries out the reaction esculetin + S-adenosyl-L-methionine = isoscopoletin + S-adenosyl-L-homocysteine + H(+). The enzyme catalyses esculetin + S-adenosyl-L-methionine = scopoletin + S-adenosyl-L-homocysteine + H(+). The protein operates within aromatic compound metabolism. It participates in secondary metabolite biosynthesis. With respect to regulation, inhibited by zinc Zn(2+), copper Cu(2+) and silver Ag(+) ions. In terms of biological role, O-methyltransferase involved in the biosynthesis of methoxylated coumarins natural products such as isoscopoletin, scopoletin, xanthotoxin and bergapten, photosensitizers used for medical purpose such as treating psoriasis and vitiligo or facilitating resistance to microbial infection and other stresses. Catalyzes the methylation of esculetin, bergaptol and xanthotoxol, but seems inactive on scopoletin and isoscopoletin. The protein is Esculetin O-methyltransferase of Kitagawia praeruptora (Peucedanum praeruptorum).